The primary structure comprises 577 residues: Zona pellucida sperm-binding protein 3 receptor (577 aa).

The N-terminal stretch at 1 to 32 is a signal peptide; it reads MTAWSLHELWKTSHSTLFQVTLATVLMAPVLG. Sushi domains are found at residues 33 to 92, 93 to 154, 155 to 219, 220 to 279, 280 to 346, and 347 to 412; these read DCGP…FCAR, KRCK…ECVI, ATCE…ACEK, IVCH…TCEP, NGCI…GCER, and VCCP…SCEA. Disulfide bonds link Cys-34/Cys-78, Cys-64/Cys-90, Cys-95/Cys-136, Cys-122/Cys-152, Cys-157/Cys-200, Cys-186/Cys-217, Cys-222/Cys-264, Cys-250/Cys-277, Cys-282/Cys-332, Cys-316/Cys-344, Cys-349/Cys-397, and Cys-382/Cys-410. N-linked (GlcNAc...) asparagine glycans are attached at residues Asn-72 and Asn-81. N-linked (GlcNAc...) asparagine glycans are attached at residues Asn-144, Asn-195, and Asn-204. Residue Asn-335 is glycosylated (N-linked (GlcNAc...) asparagine). N-linked (GlcNAc...) asparagine glycosylation is found at Asn-426, Asn-431, Asn-434, Asn-443, Asn-462, Asn-475, and Asn-497. Residues 451–509 form the Sushi 7 domain; the sequence is AVCPKPEIINGNLSVEKEIYAEMENITIQCDSGYDLVGSSNIICLENRTWYPDIPFCIM. Cystine bridges form between Cys-453-Cys-494 and Cys-480-Cys-507.

In terms of assembly, homomultimer; disulfide-linked. Post-translationally, glycosylated. As to expression, testis specific.

Its subcellular location is the cytoplasmic vesicle. It localises to the secretory vesicle. The protein resides in the acrosome lumen. Functionally, binds to ZP3 glycoprotein in egg zona pellucida. Probably involved in interactions between sperm acrosome and egg zona pellucida during and immediately following the acrosome reaction. This is Zona pellucida sperm-binding protein 3 receptor (Zp3r) from Rattus norvegicus (Rat).